Here is a 92-residue protein sequence, read N- to C-terminus: MPANAKVTIRYGKYEACGTVEYREDRLDGLQAVLKADGHEVELKQIEDWNVVELIVNGETVYTCNITELDFGGDGKLDPLCAEALQAVQTAY.

This sequence belongs to the UPF0728 family.

In Branchiostoma floridae (Florida lancelet), this protein is UPF0728 protein.